A 268-amino-acid chain; its full sequence is Tryptophan synthase alpha chain (268 aa).

Residues Glu49 and Asp60 each act as proton acceptor in the active site.

It belongs to the TrpA family. Tetramer of two alpha and two beta chains.

It carries out the reaction (1S,2R)-1-C-(indol-3-yl)glycerol 3-phosphate + L-serine = D-glyceraldehyde 3-phosphate + L-tryptophan + H2O. The protein operates within amino-acid biosynthesis; L-tryptophan biosynthesis; L-tryptophan from chorismate: step 5/5. Its function is as follows. The alpha subunit is responsible for the aldol cleavage of indoleglycerol phosphate to indole and glyceraldehyde 3-phosphate. In Xanthomonas oryzae pv. oryzae (strain PXO99A), this protein is Tryptophan synthase alpha chain.